The following is a 237-amino-acid chain: MASRHSPQTAAQPDAADKAQALRLTPVSRETETRLDAYLDLLRLWQAKTNLVAPSTLPQLWTRHVADSLQLLALAPTARRWLDFGSGGGFPGIVLACAMAEHDGGHVTLVERNAKKAAFLREALRVTGAPGTVMLADIGDNVDRFPRALDCITARAVAPLHQLIGFAAPLMTEGSKVLFLKGQDVEAELTEATKYWKIEPQLHASLTGGQGWIVELDRIVRHAPSTTNPEAAAHDRH.

Residues 1-25 are disordered; it reads MASRHSPQTAAQPDAADKAQALRLT. Low complexity predominate over residues 7–21; sequence PQTAAQPDAADKAQA. The S-adenosyl-L-methionine site is built by Gly85, Phe90, and Arg155.

It belongs to the methyltransferase superfamily. RNA methyltransferase RsmG family.

It is found in the cytoplasm. The enzyme catalyses guanosine(527) in 16S rRNA + S-adenosyl-L-methionine = N(7)-methylguanosine(527) in 16S rRNA + S-adenosyl-L-homocysteine. In terms of biological role, specifically methylates the N7 position of guanine in position 527 of 16S rRNA. This is Ribosomal RNA small subunit methyltransferase G from Rhodopseudomonas palustris (strain HaA2).